The following is a 514-amino-acid chain: MYKNQLQELAQRSCFNLPAYTCLREGPDHAPRFKAAVNFNGEQFESPGFFTTLRQAEHAAAEVALAALARRGPSYSLAARILDETGVYKNLLQEVAQRVGAPLPSYTTERSGLGHLPVFTCTVELAGITFTGDPAKNKKQAEKNAASAAWSSLRQLVRQEASSSNEPESNDEQEQIRIARALLNYRLKEKMAMANNPHASPFPKKFPMQPERRTAFPQSSHSSYSKILPLFRPKSNSRSRPESPAASDAASQTPFRPTESPNPRSRFPAAEAAPYVPVGHFRMPCHSMAPPVTVRTSIPVFSAPPLPPPGARTQQLPPLMSHPPPIRMASPVRIRPAPPLFTPSAVQGPKPMMPVQIKDVQHQQIKETRSPVMPVQVKDAQNQLLKGSLSPVIPVQIKDVQSQPPKEALSPAIPVQIKDVQLQPRNEPVSIGKGVVPLPAIRPPVKVEAPAEVKEASQPVAGSSVVQCKADTSPDSLPKTQLKTANADNADAKDDHLPVDAEEVEDIIRHLELK.

2 DRBM domains span residues 1–70 and 87–155; these read MYKN…ALAR and VYKN…SLRQ. 2 disordered regions span residues 195 to 268 and 455 to 496; these read NNPH…SRFP and EASQ…KDDH. Polar residues-rich tracts occupy residues 216-225, 249-263, and 473-484; these read FPQSSHSSYS, AASQ…SPNP, and SPDSLPKTQLKT.

Its function is as follows. Binds double-stranded RNA. The chain is Double-stranded RNA-binding protein 6 (DRB6) from Oryza sativa subsp. japonica (Rice).